A 353-amino-acid polypeptide reads, in one-letter code: UPF0283 membrane protein YcjF (353 aa).

3 helical membrane-spanning segments follow: residues 70–90 (MVMG…VQWT), 100–120 (VALG…GSVV), and 213–233 (ESTL…FIAW).

Belongs to the UPF0283 family.

The protein resides in the cell inner membrane. The polypeptide is UPF0283 membrane protein YcjF (Salmonella schwarzengrund (strain CVM19633)).